The chain runs to 794 residues: Potassium transporter 2 (794 aa).

Residues 1–21 (MDLNLGKCCGSRSSKKESWRS) lie on the Cytoplasmic side of the membrane. The chain crosses the membrane as a helical span at residues 22–42 (VLLLAYQSLGVVYGDLSISPL). The Extracellular segment spans residues 43-64 (YVFKSTFAEDIQHSETNEEIYG). The helical transmembrane segment at 65 to 85 (VMSFVFWTLTLVPLLKYVFIV) threads the bilayer. Over 86 to 153 (LRADDNGEGG…EKHKWLHTAL (68 aa)) the chain is Cytoplasmic. Residues 154–174 (LLLVLLGTCMVIGDGLLTPAI) form a helical membrane-spanning segment. The Extracellular portion of the chain corresponds to 175–193 (SVFSAVSGLELNMSKEHHQ). Residues 194-214 (YAVIPITCFILVCLFSLQHFG) traverse the membrane as a helical segment. At 215–217 (THR) the chain is on the cytoplasmic side. A helical transmembrane segment spans residues 218–238 (VGFVFAPIVLTWLLCISGIGL). Residues 239–265 (YNIIQWNPHIYKALSPTYMFMFLRKTR) are Extracellular-facing. The chain crosses the membrane as a helical span at residues 266–286 (VSGWMSLGGILLCITGAEAMF). Residues 287 to 294 (ADLGHFNY) lie on the Cytoplasmic side of the membrane. The chain crosses the membrane as a helical span at residues 295 to 315 (AAIQIAFTFLVYPALILAYMG). The Extracellular segment spans residues 316-339 (QAAYLSRHHHSAHAIGFYVSVPKC). Residues 340-360 (LHWPVLAVAILASVVGSQAII) traverse the membrane as a helical segment. Over 361–391 (SGTFSIINQSQSLGCFPRVKVIHTSDKMHGQ) the chain is Cytoplasmic. Residues 392–412 (IYIPEINWMLMILCIAVTIGF) traverse the membrane as a helical segment. Residues 413 to 417 (RDVKH) are Extracellular-facing. Helical transmembrane passes span 418 to 438 (LGNA…CLTS) and 439 to 459 (LVIV…LLFF). Over 460–476 (GSIELLYFSASLTKFRE) the chain is Extracellular. The chain crosses the membrane as a helical span at residues 477–497 (GAWLPILLSLIFMIIMFVWHY). The Cytoplasmic portion of the chain corresponds to 498-794 (TTIKKYEFDL…LLEVGMVYVV (297 aa)).

This sequence belongs to the HAK/KUP transporter (TC 2.A.72.3) family. As to expression, slightly detected in roots, stems, leaves and flowers of mature plants and in potassium-starved plants.

It localises to the cell membrane. Its function is as follows. Low-affinity potassium transporter. Could mediate the potassium-dependent cell expansion in growing tissues. This is Potassium transporter 2 (POT2) from Arabidopsis thaliana (Mouse-ear cress).